Here is a 115-residue protein sequence, read N- to C-terminus: UPF0102 protein NMA0341 (115 aa).

This sequence belongs to the UPF0102 family.

The sequence is that of UPF0102 protein NMA0341 from Neisseria meningitidis serogroup A / serotype 4A (strain DSM 15465 / Z2491).